Reading from the N-terminus, the 58-residue chain is Small integral membrane protein 11 (58 aa).

The chain crosses the membrane as a helical span at residues 9–29 (FPLLLYILAAKTLILCLAFAG). The stretch at 29 to 58 (GVKVYQRKRLEAKQQKVEAEKRKQAEKKES) forms a coiled coil.

The protein resides in the membrane. The sequence is that of Small integral membrane protein 11 (SMIM11) from Bos taurus (Bovine).